Consider the following 102-residue polypeptide: Aspartyl/glutamyl-tRNA(Asn/Gln) amidotransferase subunit C (102 aa).

This sequence belongs to the GatC family. In terms of assembly, heterotrimer of A, B and C subunits.

It carries out the reaction L-glutamyl-tRNA(Gln) + L-glutamine + ATP + H2O = L-glutaminyl-tRNA(Gln) + L-glutamate + ADP + phosphate + H(+). It catalyses the reaction L-aspartyl-tRNA(Asn) + L-glutamine + ATP + H2O = L-asparaginyl-tRNA(Asn) + L-glutamate + ADP + phosphate + 2 H(+). Allows the formation of correctly charged Asn-tRNA(Asn) or Gln-tRNA(Gln) through the transamidation of misacylated Asp-tRNA(Asn) or Glu-tRNA(Gln) in organisms which lack either or both of asparaginyl-tRNA or glutaminyl-tRNA synthetases. The reaction takes place in the presence of glutamine and ATP through an activated phospho-Asp-tRNA(Asn) or phospho-Glu-tRNA(Gln). This is Aspartyl/glutamyl-tRNA(Asn/Gln) amidotransferase subunit C from Lactobacillus acidophilus (strain ATCC 700396 / NCK56 / N2 / NCFM).